A 256-amino-acid polypeptide reads, in one-letter code: Dihydroorotate dehydrogenase B (NAD(+)), electron transfer subunit (256 aa).

The FAD-binding FR-type domain maps to 1 to 101 (MKKAHLTVQS…LGPLGNGFPV (101 aa)). Residues 52 to 55 (RPLS), 69 to 71 (IYR), and 76 to 77 (GT) each bind FAD. Residues C220, C225, C228, and C243 each contribute to the [2Fe-2S] cluster site.

This sequence belongs to the PyrK family. Heterotetramer of 2 PyrK and 2 PyrD type B subunits. Requires [2Fe-2S] cluster as cofactor. The cofactor is FAD.

It functions in the pathway pyrimidine metabolism; UMP biosynthesis via de novo pathway; orotate from (S)-dihydroorotate (NAD(+) route): step 1/1. In terms of biological role, responsible for channeling the electrons from the oxidation of dihydroorotate from the FMN redox center in the PyrD type B subunit to the ultimate electron acceptor NAD(+). This is Dihydroorotate dehydrogenase B (NAD(+)), electron transfer subunit from Bacillus velezensis (strain DSM 23117 / BGSC 10A6 / LMG 26770 / FZB42) (Bacillus amyloliquefaciens subsp. plantarum).